The following is a 300-amino-acid chain: Putative heme-binding peroxidase (300 aa).

The active-site Proton acceptor is H39. 2 disordered regions span residues 44 to 64 (YDKSTDTGGSNGAGMRYEAEG) and 116 to 135 (GRTDFADDSRVPPRGRLPDA). The segment covering 116–126 (GRTDFADDSRV) has biased composition (basic and acidic residues). H163 is a heme b binding site. W179 functions as the Tryptophan radical intermediate in the catalytic mechanism.

Belongs to the peroxidase family. Cytochrome c peroxidase subfamily. Requires heme b as cofactor.

Destroys radicals which are normally produced within the cells and which are toxic to biological systems. The protein is Putative heme-binding peroxidase of Pyricularia oryzae (strain 70-15 / ATCC MYA-4617 / FGSC 8958) (Rice blast fungus).